The following is a 115-amino-acid chain: NADH-ubiquinone oxidoreductase chain 3 (115 aa).

The next 3 helical transmembrane spans lie at 3–23 (IMIT…IAFW), 55–75 (FFLV…LLPL), and 87–107 (MLTT…YEWL).

It belongs to the complex I subunit 3 family. As to quaternary structure, core subunit of respiratory chain NADH dehydrogenase (Complex I) which is composed of 45 different subunits. Interacts with TMEM186. Interacts with TMEM242.

The protein localises to the mitochondrion inner membrane. It carries out the reaction a ubiquinone + NADH + 5 H(+)(in) = a ubiquinol + NAD(+) + 4 H(+)(out). Functionally, core subunit of the mitochondrial membrane respiratory chain NADH dehydrogenase (Complex I) which catalyzes electron transfer from NADH through the respiratory chain, using ubiquinone as an electron acceptor. Essential for the catalytic activity of complex I. The polypeptide is NADH-ubiquinone oxidoreductase chain 3 (Dasypus novemcinctus (Nine-banded armadillo)).